Consider the following 620-residue polypeptide: Cilia- and flagella-associated protein 52 (620 aa).

WD repeat units lie at residues 62–106 (GHGN…LIAR), 109–150 (LHKG…AICG), 156–195 (LNVG…RKIW), 288–327 (QLQG…ETLI), 330–369 (CHFE…ELLR), 372–411 (VPNM…LMYT), 415–454 (AHRI…QKLE), 459–498 (EHKS…RNQM), 500–541 (LANT…RELE), 543–582 (SLSG…VTHV), and 585–620 (GHSG…PFAS).

This sequence belongs to the CFAP52 family. In terms of assembly, microtubule inner protein component of sperm flagellar doublet microtubules. Interacts with BRCA2. Interacts with the CCT chaperonin complex. Interacts with HSP70. Interacts with AK8. Interacts with CFAP45. Interacts with DNAI1. Interacts with IQDC.

It is found in the cytoplasm. It localises to the cytoskeleton. The protein resides in the cilium axoneme. Its subcellular location is the flagellum axoneme. In terms of biological role, microtubule inner protein (MIP) part of the dynein-decorated doublet microtubules (DMTs) in cilia axoneme. Important for proper ciliary and flagellar beating. May act in cooperation with CFAP45 and axonemal dynein subunit DNAH11. May play a role in cell growth and/or survival. The polypeptide is Cilia- and flagella-associated protein 52 (Mus musculus (Mouse)).